The primary structure comprises 220 residues: MRRNFLFFFVFMLNAFRIYSGIPSYLNVYSGVGLGVDNFTQDLFFYERLKYQFFSGVGVNVSQNLAFGGEFNLDIKFLPSHTPYTNEIIFMLDDQAYLKHSLNYFIIKDVSFSLRMYGNYFFLSYTPMFSLIFFTGLKFSYIGAKICFVDSRDWVLLDNFVLGIDIGARINVDFIFLEYTISPIFYNKPLLLNQMHKITLGFIFQFDVATKNESEILSIL.

This is an uncharacterized protein from Borreliella burgdorferi (strain ATCC 35210 / DSM 4680 / CIP 102532 / B31) (Borrelia burgdorferi).